The following is a 576-amino-acid chain: Vacuolar protein sorting-associated protein vps5 (576 aa).

Disordered stretches follow at residues 1–60 (MLGH…PRKR) and 156–198 (DAAS…APQS). Residue Thr55 is modified to Phosphothreonine. A compositionally biased stretch (polar residues) spans 156 to 169 (DAASSSAPNFTHTV). The span at 170 to 181 (SSASSQKQGSTS) shows a compositional bias: low complexity. In terms of domain architecture, PX spans 200-317 (TPFYIQVHDP…KLFLEAETFD (118 aa)). A 1,2-diacyl-sn-glycero-3-phospho-(1D-myo-inositol-3-phosphate) contacts are provided by Arg244, Lys270, and Arg284. Ser332 is subject to Phosphoserine.

This sequence belongs to the sorting nexin family. As to quaternary structure, component of the retromer complex which consists of vps29, vps26, vps35, vps5 and vps17.

It is found in the cytoplasm. The protein resides in the golgi apparatus. The protein localises to the membrane. In terms of biological role, required for efficient sporulation target of PtdIns(3)P in vesicle transport required for onset of the forespore membrane formation. Plays a role in vesicular protein sorting. Required for the endosome-to-Golgi retrieval of the vacuolar protein sorting receptor pep1/vps10. Component of the membrane-associated retromer complex which is essential in endosome-to-Golgi retrograde transport. The vps29-vps26-vps35 subcomplex may be involved in cargo selection. The polypeptide is Vacuolar protein sorting-associated protein vps5 (vps5) (Schizosaccharomyces pombe (strain 972 / ATCC 24843) (Fission yeast)).